Here is a 549-residue protein sequence, read N- to C-terminus: Acetyl-coenzyme A transporter 1 (549 aa).

Basic and acidic residues predominate over residues 1–12; that stretch reads MSPTISHKDSSR. The segment at 1-46 is disordered; it reads MSPTISHKDSSRQRRPGNFSHSLDMKSGPLPPGGWDDSHLDSAGRE. Residues 1-74 are Cytoplasmic-facing; that stretch reads MSPTISHKDS…PQSFRAELSS (74 aa). 2 positions are modified to phosphoserine: Ser22 and Ser42. A compositionally biased stretch (basic and acidic residues) spans 36 to 46; that stretch reads DDSHLDSAGRE. Residues 75-95 traverse the membrane as a helical segment; sequence ILLLLFLYVLQGIPLGLAGSI. The Extracellular portion of the chain corresponds to 96-113; the sequence is PLILQSKNVSYTDQAFFS. Asn103 carries N-linked (GlcNAc...) asparagine glycosylation. The chain crosses the membrane as a helical span at residues 114–134; that stretch reads FVFWPFSLKLLWAPLVDAVYV. At 135–141 the chain is on the cytoplasmic side; the sequence is KNFGRRK. The chain crosses the membrane as a helical span at residues 142-162; sequence SWLVPTQYILGLFMIYLSTQV. Residues 163–175 lie on the Extracellular side of the membrane; the sequence is DRLLGNTDDRTPD. The helical transmembrane segment at 176–196 threads the bilayer; it reads VIALTVAFFLFEFLAATQDIA. At 197–217 the chain is on the cytoplasmic side; the sequence is VDGWALTMLSRENVGYASTCN. Residues 218–238 traverse the membrane as a helical segment; that stretch reads SVGQTAGYFLGNVLFLALESA. At 239–256 the chain is on the extracellular side; it reads DFCNKYLRFQPQPRGIVT. Residues 257–277 traverse the membrane as a helical segment; the sequence is LSDFLFFWGTVFLITTTLVAL. Residues 278 to 299 lie on the Cytoplasmic side of the membrane; that stretch reads LKKENEVSVVKEETQGITDTYK. The chain crosses the membrane as a helical span at residues 300–320; that stretch reads LLFAIIKMPAVLTFCLLILTA. Topologically, residues 321-343 are extracellular; sequence KIGFSAADAVTGLKLVEEGVPKE. The helical transmembrane segment at 344-364 threads the bilayer; that stretch reads HLALLAVPMVPLQIILPLIIS. The Cytoplasmic portion of the chain corresponds to 365–378; that stretch reads KYTAGPQPLNTFYK. A helical transmembrane segment spans residues 379 to 398; that stretch reads AMPYRLLLGLEYALLVWWTP. The Extracellular portion of the chain corresponds to 399-404; it reads KVEHQG. The chain crosses the membrane as a helical span at residues 405 to 425; sequence GFPIYYYIVVLLSYALHQVTV. The Cytoplasmic portion of the chain corresponds to 426-508; that stretch reads YSMYVSIMAF…LGGSCVTALD (83 aa). The helical transmembrane segment at 509 to 529 threads the bilayer; it reads GYYVESIICVFIGFGWWFFLG. Residues 530–549 lie on the Extracellular side of the membrane; it reads PKFKKLQDEGSSSWKCKRNN.

This sequence belongs to the SLC33A transporter family. In terms of assembly, homodimerizes. Ubiquitous. Detected in heart, brain, placenta, lung, liver, skeletal muscle, kidney and pancreas. With strongest signals in pancreas.

Its subcellular location is the endoplasmic reticulum membrane. It carries out the reaction acetyl-CoA(in) = acetyl-CoA(out). Acetyl-CoA transporter that mediates active acetyl-CoA import through the endoplasmic reticulum (ER) membrane into the ER lumen where specific ER-based acetyl-CoA:lysine acetyltransferases are responsible for the acetylation of ER-based protein substrates, such as BACE1. Necessary for O-acetylation of gangliosides. This is Acetyl-coenzyme A transporter 1 from Homo sapiens (Human).